Reading from the N-terminus, the 805-residue chain is BLOC-2 complex member HPS6 (805 aa).

Residues 743-805 form a disordered region; that stretch reads GAQGRPSGPV…LGAADVGVHL (63 aa). The segment covering 764 to 773 has biased composition (pro residues); sequence GTPPPTPPRG.

As to quaternary structure, component of the biogenesis of lysosome-related organelles complex-2 (or BLOC2) composed of HPS3, HPS5 and HPS6. Interacts with HPS5 and HPS3. Interacts with biogenesis of lysosome-related organelles complex-1 (BLOC1). Interacts with dynein intermediate chain. Interacts with AP-3 complex. Interacts with DCTN1. In terms of tissue distribution, widely expressed, with lowest expression in skeletal muscle.

Its subcellular location is the microsome membrane. It is found in the cytoplasm. The protein resides in the cytosol. It localises to the early endosome membrane. The protein localises to the lysosome membrane. Functionally, may regulate the synthesis and function of lysosomes and of highly specialized organelles, such as melanosomes and platelet dense granules. Acts as a cargo adapter for the dynein-dynactin motor complex to mediate the transport of lysosomes from the cell periphery to the perinuclear region. Facilitates retrograde lysosomal trafficking by linking the motor complex to lysosomes, and perinuclear positioning of lysosomes is crucial for the delivery of endocytic cargos to lysosomes, for lysosome maturation and functioning. The chain is BLOC-2 complex member HPS6 (Hps6) from Mus musculus (Mouse).